The chain runs to 242 residues: Type III pantothenate kinase (242 aa).

ATP is bound at residue 7–14 (DNSNTRTK). Residues Tyr-88 and 95-98 (GADR) contribute to the substrate site. Catalysis depends on Asp-97, which acts as the Proton acceptor. Asp-117 contributes to the K(+) binding site. Residue Thr-120 participates in ATP binding. A substrate-binding site is contributed by Thr-172.

Belongs to the type III pantothenate kinase family. Homodimer. The cofactor is NH4(+). It depends on K(+) as a cofactor.

The protein localises to the cytoplasm. It catalyses the reaction (R)-pantothenate + ATP = (R)-4'-phosphopantothenate + ADP + H(+). Its pathway is cofactor biosynthesis; coenzyme A biosynthesis; CoA from (R)-pantothenate: step 1/5. Functionally, catalyzes the phosphorylation of pantothenate (Pan), the first step in CoA biosynthesis. This Akkermansia muciniphila (strain ATCC BAA-835 / DSM 22959 / JCM 33894 / BCRC 81048 / CCUG 64013 / CIP 107961 / Muc) protein is Type III pantothenate kinase.